The primary structure comprises 276 residues: Transport and Golgi organization protein 2 homolog (276 aa).

This sequence belongs to the Tango2 family.

The protein resides in the cytoplasm. The protein localises to the mitochondrion. Its subcellular location is the golgi apparatus. May be involved in lipid homeostasis. This chain is Transport and Golgi organization protein 2 homolog (TANGO2), found in Homo sapiens (Human).